The chain runs to 350 residues: Cell division protein ZipA (350 aa).

The Periplasmic segment spans residues 1–6 (MEDLQL). Residues 7–27 (VLFVLGAIAIVAVLVHGFWSI) form a helical membrane-spanning segment. At 28–350 (RKQQPRTIKE…QYLARIRANA (323 aa)) the chain is on the cytoplasmic side. 3 disordered regions span residues 36-55 (KEQP…AEGF), 65-136 (VRKL…PSAR), and 187-213 (RVPA…EEPL). Basic and acidic residues-rich tracts occupy residues 65–109 (VRKL…ESRA) and 116–131 (AAHE…HEEP).

This sequence belongs to the ZipA family. Interacts with FtsZ via their C-terminal domains.

It localises to the cell inner membrane. In terms of biological role, essential cell division protein that stabilizes the FtsZ protofilaments by cross-linking them and that serves as a cytoplasmic membrane anchor for the Z ring. Also required for the recruitment to the septal ring of downstream cell division proteins. This Shewanella amazonensis (strain ATCC BAA-1098 / SB2B) protein is Cell division protein ZipA.